A 309-amino-acid chain; its full sequence is Protein FdhE homolog (309 aa).

The protein belongs to the FdhE family.

It is found in the cytoplasm. In terms of biological role, necessary for formate dehydrogenase activity. This chain is Protein FdhE homolog, found in Pectobacterium atrosepticum (strain SCRI 1043 / ATCC BAA-672) (Erwinia carotovora subsp. atroseptica).